A 252-amino-acid polypeptide reads, in one-letter code: MITKRIIPCLDVRKGRVVKGVNFVDIKDAGDPVALARAYNDQGADEIVFLDITASHEERYILLDVVKKTSEEIFIPLTVGGGIRTVEDMRQIIKSGADKVSINSSAVKNPSMITDCARQFGSQAVVIAMDVKRGADGRYEVYVRGGREKTGLEAVDWARRVAQLGAGEILLTSMDRDGTKSGYDLEITKRISQAVNIPVIASGGAGSVQDFADAFIEGQADAALAASLFHYNEVSIPRLKQSLHEMDISMRR.

Active-site residues include aspartate 11 and aspartate 130.

It belongs to the HisA/HisF family. Heterodimer of HisH and HisF.

Its subcellular location is the cytoplasm. It carries out the reaction 5-[(5-phospho-1-deoxy-D-ribulos-1-ylimino)methylamino]-1-(5-phospho-beta-D-ribosyl)imidazole-4-carboxamide + L-glutamine = D-erythro-1-(imidazol-4-yl)glycerol 3-phosphate + 5-amino-1-(5-phospho-beta-D-ribosyl)imidazole-4-carboxamide + L-glutamate + H(+). Its pathway is amino-acid biosynthesis; L-histidine biosynthesis; L-histidine from 5-phospho-alpha-D-ribose 1-diphosphate: step 5/9. IGPS catalyzes the conversion of PRFAR and glutamine to IGP, AICAR and glutamate. The HisF subunit catalyzes the cyclization activity that produces IGP and AICAR from PRFAR using the ammonia provided by the HisH subunit. In Alkaliphilus metalliredigens (strain QYMF), this protein is Imidazole glycerol phosphate synthase subunit HisF.